The chain runs to 246 residues: Small ribosomal subunit protein uS2 (246 aa).

The protein belongs to the universal ribosomal protein uS2 family.

The sequence is that of Small ribosomal subunit protein uS2 from Exiguobacterium sp. (strain ATCC BAA-1283 / AT1b).